A 244-amino-acid chain; its full sequence is Uridylate kinase (244 aa).

19–22 (KVSG) is an ATP binding site. Positions 27–32 (GERGFG) are involved in allosteric activation by GTP. Glycine 61 serves as a coordination point for UMP. ATP is bound by residues glycine 62 and arginine 66. UMP contacts are provided by residues aspartate 80 and 141 to 148 (IGSPFFTT). The ATP site is built by threonine 168, glutamine 169, tyrosine 174, and aspartate 177.

Belongs to the UMP kinase family. As to quaternary structure, homohexamer.

It localises to the cytoplasm. The enzyme catalyses UMP + ATP = UDP + ADP. The protein operates within pyrimidine metabolism; CTP biosynthesis via de novo pathway; UDP from UMP (UMPK route): step 1/1. Allosterically activated by GTP. Inhibited by UTP. In terms of biological role, catalyzes the reversible phosphorylation of UMP to UDP. The polypeptide is Uridylate kinase (Anaplasma phagocytophilum (strain HZ)).